A 236-amino-acid chain; its full sequence is Class B acid phosphatase (236 aa).

The N-terminal stretch at 1-22 (MKNVMKLSVIALLTAAAVPAMA) is a signal peptide. Catalysis depends on aspartate 67, which acts as the Nucleophile. Positions 67 and 69 each coordinate Mg(2+). Aspartate 69 serves as the catalytic Proton donor. Residues 136-137 (TG) and lysine 176 each bind substrate. Aspartate 191 lines the Mg(2+) pocket.

It belongs to the class B bacterial acid phosphatase family. In terms of assembly, homotetramer. Mg(2+) is required as a cofactor.

The protein localises to the periplasm. It catalyses the reaction a phosphate monoester + H2O = an alcohol + phosphate. In terms of biological role, dephosphorylates several organic phosphate monoesters. Also has a phosphotransferase activity catalyzing the transfer of low-energy phosphate groups from organic phosphate monoesters to free hydroxyl groups of various organic compounds. In Haemophilus influenzae (strain ATCC 51907 / DSM 11121 / KW20 / Rd), this protein is Class B acid phosphatase (aphA).